Consider the following 321-residue polypeptide: Cytochrome f (321 aa).

A signal peptide spans 1–37; it reads MKIYRQIKQSFSITKIVFSFFISLLLNLVAQPTICQA. Heme is bound by residues Phe38, Cys58, Cys61, and His62. The helical transmembrane segment at 287–306 threads the bilayer; the sequence is VQGLIAFFISVVLAQIFLVL.

Belongs to the cytochrome f family. The 4 large subunits of the cytochrome b6-f complex are cytochrome b6, subunit IV (17 kDa polypeptide, petD), cytochrome f and the Rieske protein, while the 4 small subunits are PetG, PetL, PetM and PetN. The complex functions as a dimer. The cofactor is heme.

It localises to the plastid. Its subcellular location is the cyanelle thylakoid membrane. Functionally, component of the cytochrome b6-f complex, which mediates electron transfer between photosystem II (PSII) and photosystem I (PSI), cyclic electron flow around PSI, and state transitions. The protein is Cytochrome f (petA) of Cyanophora paradoxa.